Consider the following 281-residue polypeptide: 4-diphosphocytidyl-2-C-methyl-D-erythritol kinase (281 aa).

The active site involves Lys15. 98-108 (PTGAGLGGGSS) lines the ATP pocket. Asp140 is a catalytic residue.

Belongs to the GHMP kinase family. IspE subfamily.

It catalyses the reaction 4-CDP-2-C-methyl-D-erythritol + ATP = 4-CDP-2-C-methyl-D-erythritol 2-phosphate + ADP + H(+). It functions in the pathway isoprenoid biosynthesis; isopentenyl diphosphate biosynthesis via DXP pathway; isopentenyl diphosphate from 1-deoxy-D-xylulose 5-phosphate: step 3/6. Catalyzes the phosphorylation of the position 2 hydroxy group of 4-diphosphocytidyl-2C-methyl-D-erythritol. This is 4-diphosphocytidyl-2-C-methyl-D-erythritol kinase from Neisseria gonorrhoeae (strain ATCC 700825 / FA 1090).